The sequence spans 77 residues: MENFDKVKDIIVDRLGVDAEKVTEDASFKDDLGADSLDIAELVMELEDEFGTEIPDEEAEKINTVGDAVKFINSIEK.

Positions 1–76 (MENFDKVKDI…DAVKFINSIE (76 aa)) constitute a Carrier domain. At S36 the chain carries O-(pantetheine 4'-phosphoryl)serine.

Belongs to the acyl carrier protein (ACP) family. In terms of processing, 4'-phosphopantetheine is transferred from CoA to a specific serine of apo-ACP by AcpS. This modification is essential for activity because fatty acids are bound in thioester linkage to the sulfhydryl of the prosthetic group.

The protein localises to the cytoplasm. It functions in the pathway lipid metabolism; fatty acid biosynthesis. In terms of biological role, carrier of the growing fatty acid chain in fatty acid biosynthesis. This is Acyl carrier protein from Staphylococcus saprophyticus subsp. saprophyticus (strain ATCC 15305 / DSM 20229 / NCIMB 8711 / NCTC 7292 / S-41).